A 488-amino-acid chain; its full sequence is Germacrene A hydroxylase (488 aa).

Over 1–6 the chain is Cytoplasmic; the sequence is MEVSLT. The chain crosses the membrane as a helical; Signal-anchor for type II membrane protein span at residues 7-23; the sequence is TSIALATIVFFLYKLLT. Topologically, residues 24-488 are lumenal; it reads RPTSSKNRLP…KTELMLVPSF (465 aa). N-linked (GlcNAc...) asparagine glycans are attached at residues Asn169, Asn260, Asn379, and Asn412. Residue Cys432 coordinates heme.

This sequence belongs to the cytochrome P450 family. It depends on heme as a cofactor. As to expression, expressed in leaf primordia.

It localises to the endoplasmic reticulum membrane. It catalyses the reaction (+)-(R)-germacrene A + 3 reduced [NADPH--hemoprotein reductase] + 3 O2 = germacra-1(10),4,11(13)-trien-12-oate + 3 oxidized [NADPH--hemoprotein reductase] + 4 H2O + 4 H(+). It participates in secondary metabolite biosynthesis; terpenoid biosynthesis. Functionally, involved in the biosynthesis of germacrene-derived sesquiterpene lactones. Catalyzes three consecutive oxidations of germacrene A to produce germacrene A acid. Could also catalyze the three-step oxidation of non-natural substrate amorphadiene to artemisinic acid. This Helianthus annuus (Common sunflower) protein is Germacrene A hydroxylase.